The following is a 317-amino-acid chain: WSCD family member CG9164 (317 aa).

Residues Phe8–Asn28 form a helical membrane-spanning segment. N-linked (GlcNAc...) asparagine glycans are attached at residues Asn151, Asn227, and Asn233.

It belongs to the WSCD family.

The protein localises to the membrane. The chain is WSCD family member CG9164 from Drosophila melanogaster (Fruit fly).